The sequence spans 161 residues: Phosphopantetheine adenylyltransferase (161 aa).

S11 contributes to the substrate binding site. ATP contacts are provided by residues 11–12 and H19; that span reads SF. The substrate site is built by K43, L75, and R89. Residues 90–92, E100, and 125–131 contribute to the ATP site; these read GLR and YSFISSS.

Belongs to the bacterial CoaD family. In terms of assembly, homohexamer. Requires Mg(2+) as cofactor.

It is found in the cytoplasm. The enzyme catalyses (R)-4'-phosphopantetheine + ATP + H(+) = 3'-dephospho-CoA + diphosphate. It participates in cofactor biosynthesis; coenzyme A biosynthesis; CoA from (R)-pantothenate: step 4/5. In terms of biological role, reversibly transfers an adenylyl group from ATP to 4'-phosphopantetheine, yielding dephospho-CoA (dPCoA) and pyrophosphate. This chain is Phosphopantetheine adenylyltransferase, found in Staphylococcus saprophyticus subsp. saprophyticus (strain ATCC 15305 / DSM 20229 / NCIMB 8711 / NCTC 7292 / S-41).